Here is a 179-residue protein sequence, read N- to C-terminus: GTP-dependent dephospho-CoA kinase (179 aa).

The GTP site is built by aspartate 50, valine 51, valine 52, aspartate 69, lysine 71, and glutamate 126.

The protein belongs to the GTP-dependent DPCK family.

The catalysed reaction is 3'-dephospho-CoA + GTP = GDP + CoA + H(+). The protein operates within cofactor biosynthesis; coenzyme A biosynthesis. Functionally, catalyzes the GTP-dependent phosphorylation of the 3'-hydroxyl group of dephosphocoenzyme A to form coenzyme A (CoA). This Pyrococcus horikoshii (strain ATCC 700860 / DSM 12428 / JCM 9974 / NBRC 100139 / OT-3) protein is GTP-dependent dephospho-CoA kinase.